The sequence spans 90 residues: MIRYSAIVQGRVQGVGFRYFIQLTACKLSLTGWCKNLMNGNVEIEVQGLENNVLSFVSEIKKGNGFAKVSDIDLNILPVLDGEKKFSIKY.

An Acylphosphatase-like domain is found at 3–90 (RYSAIVQGRV…DGEKKFSIKY (88 aa)). Catalysis depends on residues Arg18 and Asn36.

The protein belongs to the acylphosphatase family.

The enzyme catalyses an acyl phosphate + H2O = a carboxylate + phosphate + H(+). The sequence is that of Acylphosphatase (acyP) from Clostridium beijerinckii (strain ATCC 51743 / NCIMB 8052) (Clostridium acetobutylicum).